A 247-amino-acid polypeptide reads, in one-letter code: LHFPL tetraspan subfamily member 4 protein (247 aa).

Transmembrane regions (helical) follow at residues I22–I42, F97–F117, I127–P147, and I178–G198.

Belongs to the LHFP family. Interacts with GABA(A) receptor subunits. Interacts with GABRB3. Interacts with GABRA2. Interacts with GABRG2. Identified in a complex of 720 kDa composed of LHFPL4, NLGN2, GABRA1, GABRB2, GABRG2 and GABRB3. Interacts with GABRA1. Interacts with NLGN2; leading to mutual regulation of protein level and synaptic clustering.

Its subcellular location is the cell projection. It localises to the dendrite. The protein localises to the postsynaptic cell membrane. Its function is as follows. Plays a role in the regulation of inhibitory synapse formation and function by being involved in maintening gamma-aminobutyric acid receptors (GABAARs) clustering and their associated scaffold proteins at inhibitory synaptic sites. Acts in concert with NLGN2 to recruit or stabilize GABAARs. In Bos taurus (Bovine), this protein is LHFPL tetraspan subfamily member 4 protein.